We begin with the raw amino-acid sequence, 1315 residues long: Probable nucleoporin C890.06 (1315 aa).

It belongs to the non-repetitive/WGA-negative nucleoporin family.

It is found in the cytoplasm. The protein resides in the nucleus. The chain is Probable nucleoporin C890.06 from Schizosaccharomyces pombe (strain 972 / ATCC 24843) (Fission yeast).